Reading from the N-terminus, the 479-residue chain is Glutamate--tRNA ligase (479 aa).

A 'HIGH' region motif is present at residues 9–19 (PSPTGNLHIGT). The short motif at 243–247 (KLSKR) is the 'KMSKS' region element. Lys-246 contacts ATP.

Belongs to the class-I aminoacyl-tRNA synthetase family. Glutamate--tRNA ligase type 1 subfamily. As to quaternary structure, monomer.

It is found in the cytoplasm. The catalysed reaction is tRNA(Glu) + L-glutamate + ATP = L-glutamyl-tRNA(Glu) + AMP + diphosphate. Functionally, catalyzes the attachment of glutamate to tRNA(Glu) in a two-step reaction: glutamate is first activated by ATP to form Glu-AMP and then transferred to the acceptor end of tRNA(Glu). The sequence is that of Glutamate--tRNA ligase from Synechococcus sp. (strain JA-2-3B'a(2-13)) (Cyanobacteria bacterium Yellowstone B-Prime).